A 230-amino-acid chain; its full sequence is Somatolactin (230 aa).

An N-terminal signal peptide occupies residues Met-1–Pro-25. 3 disulfide bridges follow: Cys-28–Cys-38, Cys-88–Cys-204, and Cys-221–Cys-229. N-linked (GlcNAc...) asparagine glycosylation occurs at Asn-144.

It belongs to the somatotropin/prolactin family.

It localises to the secreted. Selectively regulates proliferation and morphogenesis of neural-crest derived pigment cells. This is Somatolactin from Oryzias latipes (Japanese rice fish).